An 830-amino-acid polypeptide reads, in one-letter code: Ent-cassa-12,15-diene synthase (830 aa).

Residues 1–50 (MMLLGSPSSGGYGGKFAGASPAGGTTTMAPSAKQPSSRAPPPGITGGRND) form a disordered region. Polar residues predominate over residues 23–37 (GGTTTMAPSAKQPSS). Positions 577, 581, 721, and 729 each coordinate Mg(2+). The DDXXD motif motif lies at 577–581 (DDLFD).

Belongs to the terpene synthase family. The cofactor is Mg(2+). In terms of tissue distribution, expressed in roots and stems.

The catalysed reaction is ent-copalyl diphosphate = ent-cassa-12,15-diene + diphosphate. In terms of biological role, involved in phytocassane phytoalexins biosynthesis. Catalyzes the conversion of ent-copalyl diphosphate to the phytoalexin precursor ent-cassa-12,15-diene. In Oryza sativa subsp. indica (Rice), this protein is Ent-cassa-12,15-diene synthase (KSL7).